The primary structure comprises 256 residues: Homeobox protein goosecoid (256 aa).

A DNA-binding region (homeobox) is located at residues 160-219 (KRRHRTIFTDEQLEALENLFQETKYPDVGTREQLARKVHLREEKVEVWFKNRRAKWRRQK). The disordered stretch occupies residues 213-256 (AKWRRQKRSSSEESENAEKWNKTSSKASPEKREEEGKSDLDSDS). A compositionally biased stretch (basic and acidic residues) spans 240–256 (SPEKREEEGKSDLDSDS).

Belongs to the paired homeobox family. Bicoid subfamily. As to expression, in early gastrulation, expressed in the dorsal lip. In later stages of development found in head, limbs and body wall. In the embryo, expressed in the postotic cranial neural crest cells, the frontonasal prominence, the first branchial arch and cleft, and specific regions of large joints.

The protein localises to the nucleus. Regulates chordin (CHRD). May play a role in spatial programing within discrete embryonic fields or lineage compartments during organogenesis. In concert with NKX3-2, plays a role in defining the structural components of the middle ear; required for the development of the entire tympanic ring. Goosecoid-expressing regions of the gastrulating mouse egg cylinder have organizer-like activity when transplanted into Xenopus embryos. Probably involved in the regulatory networks that define neural crest cell fate specification and determine mesoderm cell lineages in mammals. This chain is Homeobox protein goosecoid (Gsc), found in Mus musculus (Mouse).